A 358-amino-acid chain; its full sequence is Alanine racemase (358 aa).

Residue K34 is the Proton acceptor; specific for D-alanine of the active site. At K34 the chain carries N6-(pyridoxal phosphate)lysine. Residue R129 coordinates substrate. The active-site Proton acceptor; specific for L-alanine is Y254. Residue M302 coordinates substrate.

The protein belongs to the alanine racemase family. Pyridoxal 5'-phosphate is required as a cofactor.

It carries out the reaction L-alanine = D-alanine. It functions in the pathway amino-acid biosynthesis; D-alanine biosynthesis; D-alanine from L-alanine: step 1/1. Its function is as follows. Catalyzes the interconversion of L-alanine and D-alanine. May also act on other amino acids. This chain is Alanine racemase (alr), found in Vibrio vulnificus (strain CMCP6).